A 264-amino-acid polypeptide reads, in one-letter code: Ribosomal RNA small subunit methyltransferase A (264 aa).

Positions 15, 17, 42, 64, 90, and 109 each coordinate S-adenosyl-L-methionine.

The protein belongs to the class I-like SAM-binding methyltransferase superfamily. rRNA adenine N(6)-methyltransferase family. RsmA subfamily.

The protein localises to the cytoplasm. It catalyses the reaction adenosine(1518)/adenosine(1519) in 16S rRNA + 4 S-adenosyl-L-methionine = N(6)-dimethyladenosine(1518)/N(6)-dimethyladenosine(1519) in 16S rRNA + 4 S-adenosyl-L-homocysteine + 4 H(+). Functionally, specifically dimethylates two adjacent adenosines (A1518 and A1519) in the loop of a conserved hairpin near the 3'-end of 16S rRNA in the 30S particle. May play a critical role in biogenesis of 30S subunits. In Wolbachia pipientis subsp. Culex pipiens (strain wPip), this protein is Ribosomal RNA small subunit methyltransferase A.